The chain runs to 114 residues: Adapter SH3BGRL (114 aa).

Residues 13-50 (SMAIKKKQQDVLGFLEANKIGFEEKDIAANEENRKWMR) form a required for interaction with HER2 region. The required for interaction with PFN1, HER2, and ATG12 stretch occupies residues 54–71 (PENSRPATGYPLPPQIFN). Positions 61-67 (TGYPLPP) match the SH3-binding motif.

This sequence belongs to the SH3BGR family. Monomer. Interacts with PFN1/Profilin-1. Interacts with ERBB2. Interacts with ATG12. Interacts with BECN1. Interacts with translating ribosomes.

Its subcellular location is the cytoplasm. The protein localises to the cytosol. The protein resides in the cell membrane. Functionally, appears to function as an adapter protein that bridges proteins together or proteins with mRNAs. May function as a ubiquitin ligase-substrate adapter. Additionally, associates with translating cytoplasmic ribosomes and may promote the expression of specific mRNAs. The polypeptide is Adapter SH3BGRL (SH3BGRL) (Bos taurus (Bovine)).